A 214-amino-acid polypeptide reads, in one-letter code: Adenylate kinase (214 aa).

ATP is bound at residue glycine 10–threonine 15. The NMP stretch occupies residues serine 30–valine 59. AMP is bound by residues threonine 31, arginine 36, glycine 57–valine 59, glycine 85–arginine 88, and glutamine 92. The LID stretch occupies residues glycine 126 to aspartate 163. Arginine 127 is a binding site for ATP. Positions 130 and 133 each coordinate Zn(2+). Residue valine 136–tyrosine 137 participates in ATP binding. Zn(2+) is bound by residues cysteine 150 and aspartate 153. Positions 160 and 171 each coordinate AMP. Glycine 199 serves as a coordination point for ATP.

It belongs to the adenylate kinase family. In terms of assembly, monomer.

It is found in the cytoplasm. The enzyme catalyses AMP + ATP = 2 ADP. The protein operates within purine metabolism; AMP biosynthesis via salvage pathway; AMP from ADP: step 1/1. In terms of biological role, catalyzes the reversible transfer of the terminal phosphate group between ATP and AMP. Plays an important role in cellular energy homeostasis and in adenine nucleotide metabolism. The sequence is that of Adenylate kinase from Anaeromyxobacter sp. (strain Fw109-5).